Here is a 138-residue protein sequence, read N- to C-terminus: Ribonuclease kappa-A (138 aa).

The first 24 residues, 1–24, serve as a signal peptide directing secretion; the sequence is MVLYFSPVLTFFLANFFNSKSTTT. Residues 25 to 75 lie on the Extracellular side of the membrane; that stretch reads ENLQVFLVENQHRDSKRKINPTFSKKGIEVRQQNENLWSKIVALRFDYSVW. Residues 76–96 traverse the membrane as a helical segment; sequence GIIQLVLMMGLFFYINSVALI. Topologically, residues 97–138 are cytoplasmic; sequence EDLPIDEEFNSVEEFYTAATSAYNQNAYTVGLPVHLCAYASI.

The protein belongs to the RNase K family.

It localises to the membrane. Endoribonuclease. This chain is Ribonuclease kappa-A, found in Ceratitis capitata (Mediterranean fruit fly).